Consider the following 137-residue polypeptide: Small ribosomal subunit protein uS19 (137 aa).

The interval 115 to 137 (RNRVSHGSAGVGATRSSKFVPLK) is disordered.

The protein belongs to the universal ribosomal protein uS19 family.

Protein S19 forms a complex with S13 that binds strongly to the 16S ribosomal RNA. The chain is Small ribosomal subunit protein uS19 from Methanococcoides burtonii (strain DSM 6242 / NBRC 107633 / OCM 468 / ACE-M).